Reading from the N-terminus, the 233-residue chain is MMTTPSTPLYRLEGVGKEYDGPGEELVILKGLDLTIEAGESVAIVGASGSGKSTLLHLLGALDTPTWGKLHFLDRDMGAMSPEEKAAFRNREIGFVFQFHHLLPEFSTVENVAMQAIISGMPHAEAYGLAREALDKVGLSGRVEHKVTTLSGGERQRAAIARAILLRPRVLLADEPTGNLDERTGDVVGRMLLDLNRELGMTLIVVTHNRELADLMGRRLELRAGELYDQHRP.

Residues 10-233 form the ABC transporter domain; sequence YRLEGVGKEY…AGELYDQHRP (224 aa). 46–53 contributes to the ATP binding site; the sequence is GASGSGKS.

Belongs to the ABC transporter superfamily. Lipoprotein translocase (TC 3.A.1.125) family. In terms of assembly, the complex is composed of two ATP-binding proteins (LolD) and two transmembrane proteins (LolC and LolE).

Its subcellular location is the cell inner membrane. In terms of biological role, part of the ABC transporter complex LolCDE involved in the translocation of mature outer membrane-directed lipoproteins, from the inner membrane to the periplasmic chaperone, LolA. Responsible for the formation of the LolA-lipoprotein complex in an ATP-dependent manner. The polypeptide is Lipoprotein-releasing system ATP-binding protein LolD (Nitratidesulfovibrio vulgaris (strain ATCC 29579 / DSM 644 / CCUG 34227 / NCIMB 8303 / VKM B-1760 / Hildenborough) (Desulfovibrio vulgaris)).